The primary structure comprises 189 residues: GMP synthase [glutamine-hydrolyzing] subunit A (189 aa).

Positions 1-189 (MIVILNNGGQ…CKKCGFEFEE (189 aa)) constitute a Glutamine amidotransferase type-1 domain. The active-site Nucleophile is Cys-76. Catalysis depends on residues His-163 and Glu-165.

As to quaternary structure, heterodimer composed of a glutamine amidotransferase subunit (A) and a GMP-binding subunit (B).

The enzyme catalyses XMP + L-glutamine + ATP + H2O = GMP + L-glutamate + AMP + diphosphate + 2 H(+). It functions in the pathway purine metabolism; GMP biosynthesis; GMP from XMP (L-Gln route): step 1/1. Functionally, catalyzes the synthesis of GMP from XMP. This Methanococcus maripaludis (strain C5 / ATCC BAA-1333) protein is GMP synthase [glutamine-hydrolyzing] subunit A.